We begin with the raw amino-acid sequence, 503 residues long: ATP synthase subunit alpha (503 aa).

Residue 170–177 (GDKQTGKT) coordinates ATP.

Belongs to the ATPase alpha/beta chains family. F-type ATPases have 2 components, CF(1) - the catalytic core - and CF(0) - the membrane proton channel. CF(1) has five subunits: alpha(3), beta(3), gamma(1), delta(1), epsilon(1). CF(0) has three main subunits: a(1), b(2) and c(9-12). The alpha and beta chains form an alternating ring which encloses part of the gamma chain. CF(1) is attached to CF(0) by a central stalk formed by the gamma and epsilon chains, while a peripheral stalk is formed by the delta and b chains.

The protein resides in the cell inner membrane. The enzyme catalyses ATP + H2O + 4 H(+)(in) = ADP + phosphate + 5 H(+)(out). Its function is as follows. Produces ATP from ADP in the presence of a proton gradient across the membrane. The alpha chain is a regulatory subunit. The sequence is that of ATP synthase subunit alpha from Helicobacter pylori (strain HPAG1).